A 211-amino-acid chain; its full sequence is Transcriptional regulator GfcR (211 aa).

It belongs to the purine/pyrimidine phosphoribosyltransferase family. GfcR subfamily.

Functionally, DNA-binding transcriptional regulator that functions as a regulator of central sugar catabolic pathways. The protein is Transcriptional regulator GfcR of Halorubrum lacusprofundi (strain ATCC 49239 / DSM 5036 / JCM 8891 / ACAM 34).